A 242-amino-acid polypeptide reads, in one-letter code: DNA repair protein RecO (242 aa).

It belongs to the RecO family. In terms of assembly, monomer.

In terms of biological role, involved in DNA repair and RecF pathway recombination. This is DNA repair protein RecO from Shigella flexneri serotype 5b (strain 8401).